The following is a 497-amino-acid chain: Guanosine-5'-triphosphate,3'-diphosphate pyrophosphatase (497 aa).

Belongs to the GppA/Ppx family. GppA subfamily.

The catalysed reaction is guanosine 3'-diphosphate 5'-triphosphate + H2O = guanosine 3',5'-bis(diphosphate) + phosphate + H(+). The protein operates within purine metabolism; ppGpp biosynthesis; ppGpp from GTP: step 2/2. Functionally, catalyzes the conversion of pppGpp to ppGpp. Guanosine pentaphosphate (pppGpp) is a cytoplasmic signaling molecule which together with ppGpp controls the 'stringent response', an adaptive process that allows bacteria to respond to amino acid starvation, resulting in the coordinated regulation of numerous cellular activities. The protein is Guanosine-5'-triphosphate,3'-diphosphate pyrophosphatase of Aliivibrio fischeri (strain ATCC 700601 / ES114) (Vibrio fischeri).